The following is a 531-amino-acid chain: Type 2 DNA topoisomerase 6 subunit B (531 aa).

Residues Asn-42, Asp-76, 97–98, 106–113, and Lys-427 contribute to the ATP site; these read SK and GMYGLGVK.

It belongs to the TOP6B family. As to quaternary structure, homodimer. Heterotetramer of two Top6A and two Top6B chains.

It carries out the reaction ATP-dependent breakage, passage and rejoining of double-stranded DNA.. In terms of biological role, relaxes both positive and negative superturns and exhibits a strong decatenase activity. The chain is Type 2 DNA topoisomerase 6 subunit B from Metallosphaera sedula (strain ATCC 51363 / DSM 5348 / JCM 9185 / NBRC 15509 / TH2).